Here is a 210-residue protein sequence, read N- to C-terminus: Isomeliandiol synthase ISM1 (210 aa).

5 consecutive transmembrane segments (helical) span residues 17 to 37 (FTLH…TWFI), 50 to 70 (LLCW…YFVF), 107 to 127 (IEGM…YAIV), 135 to 155 (ILQF…FLTA), and 172 to 192 (YYVG…INFW). Residues 46-188 (GDRLLLCWWA…IWIIVPSLIA (143 aa)) form the EXPERA domain.

The protein belongs to the EBP family.

It is found in the membrane. It catalyses the reaction 7,8-epoxymelianol = isomeliandiol. Its pathway is secondary metabolite biosynthesis; terpenoid biosynthesis. Isomerase involved in the biosynthesis of limonoids and quassinoids triterpene natural products such as ailanthone, chaparrinone, glaucarubinone and amarolide, allelopathic degraded triterpene lactones inhibiting the growth of other plants, and possessing antimalarial, antifeedant, insecticidal, anti-inflammatory and anticancer activities. Catalyzes the conversion of 7,8-epoxymelianol to isomeliandiol via skeletal rearrangements. The polypeptide is Isomeliandiol synthase ISM1 (Ailanthus altissima (Tree-of-heaven)).